A 682-amino-acid polypeptide reads, in one-letter code: uncharacterized protein (682 aa).

The 204-residue stretch at 284 to 487 (VVNILADRLI…KDKDIAEYIV (204 aa)) folds into the MCM domain. Position 329–336 (329–336 (TDPGIGKT)) interacts with ATP.

The protein belongs to the MCM family.

This is an uncharacterized protein from Methanocaldococcus jannaschii (strain ATCC 43067 / DSM 2661 / JAL-1 / JCM 10045 / NBRC 100440) (Methanococcus jannaschii).